A 212-amino-acid chain; its full sequence is Adenylate kinase (212 aa).

Residue 10 to 15 (GAGKGT) participates in ATP binding. An NMP region spans residues 30–59 (STGDMFRAAMANQTEMGRLAKSYIDKGELV). AMP-binding positions include T31, R36, 57–59 (ELV), 86–89 (GYPR), and Q93. The LID stretch occupies residues 127-159 (GRIINRKTGETFHKVFNPPVDYKEEDYYQREDD). ATP contacts are provided by residues R128 and 137 to 138 (TF). Residues R156 and R167 each contribute to the AMP site. Q195 serves as a coordination point for ATP.

Belongs to the adenylate kinase family. As to quaternary structure, monomer.

The protein localises to the cytoplasm. It carries out the reaction AMP + ATP = 2 ADP. It participates in purine metabolism; AMP biosynthesis via salvage pathway; AMP from ADP: step 1/1. Catalyzes the reversible transfer of the terminal phosphate group between ATP and AMP. Plays an important role in cellular energy homeostasis and in adenine nucleotide metabolism. The sequence is that of Adenylate kinase from Streptococcus pyogenes serotype M3 (strain ATCC BAA-595 / MGAS315).